Consider the following 275-residue polypeptide: Autophagy protein 5 (275 aa).

The residue at position 1 (Met1) is an N-acetylmethionine. A Glycyl lysine isopeptide (Lys-Gly) (interchain with G-Cter in ATG12) cross-link involves residue Lys130.

This sequence belongs to the ATG5 family. As to quaternary structure, forms a conjugate with ATG12. Part of the minor complex composed of 4 sets of ATG12-ATG5 and ATG16L1 (400 kDa); this complex interacts with ATG3 leading to disruption of ATG7 interaction and promotion of ATG8-like proteins lipidation. Forms an 800-kDa complex composed of ATG12-ATG5 and ATG16L2. The ATG12-ATG5 conjugate interacts with RAB33A; this interaction is bridged by ATG16L1 and promotes ATG12-ATG5-ATG16L1 complex recruitment to phagophores. Interacts with TECPR1; the interaction is direct and does not take place when ATG16L1 is associated with the ATG5-ATG12 conjugate. Interacts with DHX58/RIG-1, IFIH1/MDA5 and MAVS/IPS-1 in monomeric form as well as in ATG12-ATG5 conjugate form. The interaction with MAVS is further enhanced upon vesicular stomatitis virus (VSV) infection. Interacts with ATG3. Interacts with ATG7 and ATG10. Interacts with FADD. Interacts with Bassoon/BSN; this interaction is important for the regulation of presynaptic autophagy. Interacts with ATG16L2. Conjugated to ATG12; which is essential for autophagy, but is not required for association with isolation membrane. In terms of processing, acetylated by EP300. In terms of tissue distribution, ubiquitous.

The protein resides in the cytoplasm. Its subcellular location is the preautophagosomal structure membrane. Functionally, involved in autophagic vesicle formation. Conjugation with ATG12, through a ubiquitin-like conjugating system involving ATG7 as an E1-like activating enzyme and ATG10 as an E2-like conjugating enzyme, is essential for its function. The ATG12-ATG5 conjugate acts as an E3-like enzyme which is required for lipidation of ATG8 family proteins and their association to the vesicle membranes. Involved in mitochondrial quality control after oxidative damage, and in subsequent cellular longevity. Plays a critical role in multiple aspects of lymphocyte development and is essential for both B and T lymphocyte survival and proliferation. Required for optimal processing and presentation of antigens for MHC II. Involved in the maintenance of axon morphology and membrane structures, as well as in normal adipocyte differentiation. Promotes primary ciliogenesis through removal of OFD1 from centriolar satellites and degradation of IFT20 via the autophagic pathway. As part of the ATG8 conjugation system with ATG12 and ATG16L1, required for recruitment of LRRK2 to stressed lysosomes and induction of LRRK2 kinase activity in response to lysosomal stress. In terms of biological role, may play an important role in the apoptotic process, possibly within the modified cytoskeleton. Its expression is a relatively late event in the apoptotic process, occurring downstream of caspase activity. Plays a crucial role in IFN-gamma-induced autophagic cell death by interacting with FADD. Its function is as follows. (Microbial infection) May act as a proviral factor. In association with ATG12, negatively regulates the innate antiviral immune response by impairing the type I IFN production pathway upon vesicular stomatitis virus (VSV) infection. This chain is Autophagy protein 5, found in Mus musculus (Mouse).